A 319-amino-acid polypeptide reads, in one-letter code: L-tryptophan isonitrile synthase AmbI1 (319 aa).

This sequence belongs to the isocyanide synthase family.

It carries out the reaction D-ribulose 5-phosphate + L-tryptophan = (2S)-3-(1H-indol-3-yl)-2-isocyanopropanoate + hydroxyacetone + formaldehyde + phosphate + H2O + H(+). Involved in the biosynthesis of ambiguines, a family of hapalindole-type alkaloids. Responsible for the synthesis of the isonitrile group on tryptophan using ribulose 5-phosphate as the source of the carbon atom. The protein is L-tryptophan isonitrile synthase AmbI1 of Fischerella ambigua (strain UTEX 1903).